The primary structure comprises 605 residues: Aspartate--tRNA(Asp/Asn) ligase (605 aa).

Glu186 contributes to the L-aspartate binding site. Residues 210–213 form an aspartate region; that stretch reads QQFK. L-aspartate is bound by residues Arg232 and His460. ATP is bound at residue 232–234; that stretch reads RDE. Glu494 is an ATP binding site. Arg501 contributes to the L-aspartate binding site. 546 to 549 contributes to the ATP binding site; that stretch reads GLDR.

It belongs to the class-II aminoacyl-tRNA synthetase family. Type 1 subfamily. Homodimer.

The protein localises to the cytoplasm. The enzyme catalyses tRNA(Asx) + L-aspartate + ATP = L-aspartyl-tRNA(Asx) + AMP + diphosphate. In terms of biological role, aspartyl-tRNA synthetase with relaxed tRNA specificity since it is able to aspartylate not only its cognate tRNA(Asp) but also tRNA(Asn). Reaction proceeds in two steps: L-aspartate is first activated by ATP to form Asp-AMP and then transferred to the acceptor end of tRNA(Asp/Asn). The protein is Aspartate--tRNA(Asp/Asn) ligase of Chlorobium chlorochromatii (strain CaD3).